The primary structure comprises 250 residues: Adenosine 5'-phosphosulfate reductase (250 aa).

[4Fe-4S] cluster-binding residues include cysteine 119, cysteine 120, cysteine 202, and cysteine 205. Residue cysteine 230 is the Nucleophile; cysteine thiosulfonate intermediate of the active site.

Belongs to the PAPS reductase family. CysH subfamily. Requires [4Fe-4S] cluster as cofactor.

Its subcellular location is the cytoplasm. It catalyses the reaction [thioredoxin]-disulfide + sulfite + AMP + 2 H(+) = adenosine 5'-phosphosulfate + [thioredoxin]-dithiol. Its pathway is sulfur metabolism; hydrogen sulfide biosynthesis; sulfite from sulfate. Catalyzes the formation of sulfite from adenosine 5'-phosphosulfate (APS) using thioredoxin as an electron donor. The protein is Adenosine 5'-phosphosulfate reductase of Burkholderia cepacia (Pseudomonas cepacia).